We begin with the raw amino-acid sequence, 116 residues long: MQEQAQQFIFKVTDKAVEEIKKVAQENNIENPILRIRVVPGGCSGFQYAMGFDDTVEEGDHVFEYDGVKVVIDPFSMPYVNGAELDYVVDFMGGGFTIRNPNATGSCGCGSSFSCG.

The protein belongs to the HesB/IscA family.

This is Protein aq_1857 from Aquifex aeolicus (strain VF5).